Here is a 688-residue protein sequence, read N- to C-terminus: DNA ligase (688 aa).

Residues 38-42, 87-88, and Glu118 each bind NAD(+); these read DEEYD and SL. Residue Lys120 is the N6-AMP-lysine intermediate of the active site. NAD(+) is bound by residues Arg141, Glu175, Lys291, and Lys315. 4 residues coordinate Zn(2+): Cys409, Cys412, Cys428, and Cys433. The BRCT domain maps to 590–679; the sequence is MKLDILKGLT…AELKGYNFDE (90 aa).

It belongs to the NAD-dependent DNA ligase family. LigA subfamily. Requires Mg(2+) as cofactor. Mn(2+) is required as a cofactor.

The enzyme catalyses NAD(+) + (deoxyribonucleotide)n-3'-hydroxyl + 5'-phospho-(deoxyribonucleotide)m = (deoxyribonucleotide)n+m + AMP + beta-nicotinamide D-nucleotide.. Functionally, DNA ligase that catalyzes the formation of phosphodiester linkages between 5'-phosphoryl and 3'-hydroxyl groups in double-stranded DNA using NAD as a coenzyme and as the energy source for the reaction. It is essential for DNA replication and repair of damaged DNA. The chain is DNA ligase from Thermotoga petrophila (strain ATCC BAA-488 / DSM 13995 / JCM 10881 / RKU-1).